A 715-amino-acid chain; its full sequence is Probable GTP diphosphokinase RSH3, chloroplastic (715 aa).

A chloroplast-targeting transit peptide spans 1-64; sequence MVVATTIALY…LLFSGASVKS (64 aa). Low complexity predominate over residues 65–74; that stretch reads SSSSSSSHPS. A disordered region spans residues 65-84; that stretch reads SSSSSSSHPSVGEELASIRH. The HD domain maps to 237 to 341; it reads YLQHCVETAM…IKLADRLHNM (105 aa).

This sequence belongs to the RelA/SpoT family. In terms of tissue distribution, expressed in roots, hypocotyls, shoots, cotyledons, rosette and cauline leaves, stems, petals, sepals, stamens, pistils and siliques.

It localises to the plastid. Its subcellular location is the chloroplast. The enzyme catalyses GTP + ATP = guanosine 3'-diphosphate 5'-triphosphate + AMP. Possesses ppGpp (guanosine 3'-diphosphate 5'-diphosphate) synthetase activity in vitro and is able to functionally complement E.coli relA mutants. May be involved in a rapid plant ppGpp-mediated response to pathogens and other stresses. The polypeptide is Probable GTP diphosphokinase RSH3, chloroplastic (RSH3) (Arabidopsis thaliana (Mouse-ear cress)).